Here is a 516-residue protein sequence, read N- to C-terminus: Probable inactive beta-glucosidase 14 (516 aa).

The signal sequence occupies residues 1 to 23; that stretch reads MAAAWLVVLLTVHRLLHLSGVSA. Residues Gln43, His145, and 190–191 contribute to the a beta-D-glucoside site; that span reads NQ. Residue Asn193 is glycosylated (N-linked (GlcNAc...) asparagine). Cys210 and Cys217 are disulfide-bonded. Residues Asn221 and Asn270 are each glycosylated (N-linked (GlcNAc...) asparagine). A beta-D-glucoside is bound at residue Tyr334. The cysteines at positions 342 and 347 are disulfide-linked. Position 405 (Glu405) interacts with a beta-D-glucoside. Residue Glu405 is the Nucleophile of the active site. N-linked (GlcNAc...) asparagine glycosylation is found at Asn415 and Asn423. Residues Trp454, 461–462, and Phe470 contribute to the a beta-D-glucoside site; that span reads EW.

This sequence belongs to the glycosyl hydrolase 1 family. As to expression, expressed in flowers and endosperm.

The polypeptide is Probable inactive beta-glucosidase 14 (Oryza sativa subsp. japonica (Rice)).